Here is a 382-residue protein sequence, read N- to C-terminus: MEPVECPRGLLPRPCRVLVLLNPQGGKGKALQLFQSRVQPFLEEAEITFKLILTERKNHARELVCAEELGHWDALAVMSGDGLMHEVVNGLMERPDWETAIQKPLCSLPGGSGNALAASVNHYAGYEQVTNEDLLINCTLLLCRRRLSPMNLLSLHTASGLRLYSVLSLSWGFVADVDLESEKYRRLGEIRFTVGTFFRLASLRIYQGQLAYLPVGTVASKRPASTLVQKGPVDTHLVPLEEPVPSHWTVVPEQDFVLVLVLLHTHLSSELFAAPMGRCEAGVMHLFYVRAGVSRAALLRLFLAMQKGKHMELDCPYLVHVPVVAFRLEPRSQRGVFSVDGELMVCEAVQGQVHPNYLWMVCGSRDAPSGRDSRRGPPPEEP.

Positions 12-159 (PRPCRVLVLL…MNLLSLHTAS (148 aa)) constitute a DAGKc domain. Residues 22-24 (NPQ) and 54-58 (TERKN) contribute to the ATP site. Residue 79–82 (SGDG) coordinates substrate. Aspartate 81 (proton donor/acceptor) is an active-site residue. ATP is bound by residues glutamate 86 and 111–113 (GSG). 2 consecutive short sequence motifs (nuclear export signal) follow at residues 147–155 (LSPMNLLSL) and 161–169 (LRLYSVLSL). Position 178 (aspartate 178) interacts with substrate. Arginine 185 and arginine 191 together coordinate ATP. Threonine 193 bears the Phosphothreonine mark. Serine 225 is subject to Phosphoserine. 340-342 (DGE) is an ATP binding site.

In terms of assembly, interacts with ACY1. Binds to calmodulin. Interacts with SPHKAP. Interacts with CIB1, the interaction occurs in a calcium-dependent manner. Interacts with TRAF2. Interacts with EEF1A1; the interaction enhances SPHK1 kinase activity. Requires Mg(2+) as cofactor. As to expression, widely expressed. Expressed in brain (at protein level). Detected in neurons.

Its subcellular location is the cytoplasm. It localises to the endosome membrane. It is found in the nucleus. The protein resides in the cell membrane. The protein localises to the synapse. The catalysed reaction is a sphingoid base + ATP = a sphingoid 1-phosphate + ADP + H(+). It carries out the reaction L-seryl-[protein] + acetyl-CoA = O-acetyl-L-seryl-[protein] + CoA. The enzyme catalyses sphinganine + ATP = sphinganine 1-phosphate + ADP + H(+). It catalyses the reaction sphing-4-enine + ATP = sphing-4-enine 1-phosphate + ADP + H(+). The catalysed reaction is 1-O-hexadecyl-2-amino-sn-glycerol + ATP = 1-O-hexadecyl-2-desoxy-2-amino-sn-glycero-3-phosphate + ADP + H(+). Its activity is regulated as follows. Acetyltransferase activity increases in presence of the kinase substrate, sphingosine. In Purkinje cells, kinase activity on sphingosine increases in presence of VEGFA. In neurons, kinase activity increases during the first 24h in presence of Amyloid-beta protein 42 to decrease after 96h. Catalyzes the phosphorylation of sphingosine to form sphingosine 1-phosphate (SPP), a lipid mediator with both intra- and extracellular functions. Also acts on D-erythro-sphingosine and to a lesser extent sphinganine, but not other lipids, such as D,L-threo-dihydrosphingosine, N,N-dimethylsphingosine, diacylglycerol, ceramide, or phosphatidylinositol. In contrast to proapoptotic SPHK2, has a negative effect on intracellular ceramide levels, enhances cell growth and inhibits apoptosis. Involved in the regulation of inflammatory response and neuroinflammation. Via the product sphingosine 1-phosphate, stimulates TRAF2 E3 ubiquitin ligase activity, and promotes activation of NF-kappa-B in response to TNF signaling. In response to TNF and in parallel to NF-kappa-B activation, negatively regulates RANTES induction through p38 MAPK signaling pathway. Involved in endocytic membrane trafficking induced by sphingosine, recruited to dilate endosomes, also plays a role on later stages of endosomal maturation and membrane fusion independently of its kinase activity. In Purkinje cells, seems to be also involved in the regulation of autophagosome-lysosome fusion upon VEGFA. Its function is as follows. Has serine acetyltransferase activity on PTGS2/COX2 in an acetyl-CoA dependent manner. The acetyltransferase activity increases in presence of the kinase substrate, sphingosine. During neuroinflammation, through PTGS2 acetylation, promotes neuronal secretion of specialized preresolving mediators (SPMs), especially 15-R-lipoxin A4, which results in an increase of phagocytic microglia. The sequence is that of Sphingosine kinase 1 from Mus musculus (Mouse).